The chain runs to 239 residues: Small ribosomal subunit protein uS2 (239 aa).

Belongs to the universal ribosomal protein uS2 family.

This Prochlorococcus marinus (strain MIT 9313) protein is Small ribosomal subunit protein uS2.